Here is a 299-residue protein sequence, read N- to C-terminus: Hemolysin C homolog (299 aa).

CBS domains follow at residues M80–L142 and L145–E202.

Belongs to the UPF0053 family. Hemolysin C subfamily.

This is Hemolysin C homolog (tlyC) from Rickettsia rickettsii (strain Sheila Smith).